Consider the following 149-residue polypeptide: SsrA-binding protein (149 aa).

The protein belongs to the SmpB family.

It localises to the cytoplasm. In terms of biological role, required for rescue of stalled ribosomes mediated by trans-translation. Binds to transfer-messenger RNA (tmRNA), required for stable association of tmRNA with ribosomes. tmRNA and SmpB together mimic tRNA shape, replacing the anticodon stem-loop with SmpB. tmRNA is encoded by the ssrA gene; the 2 termini fold to resemble tRNA(Ala) and it encodes a 'tag peptide', a short internal open reading frame. During trans-translation Ala-aminoacylated tmRNA acts like a tRNA, entering the A-site of stalled ribosomes, displacing the stalled mRNA. The ribosome then switches to translate the ORF on the tmRNA; the nascent peptide is terminated with the 'tag peptide' encoded by the tmRNA and targeted for degradation. The ribosome is freed to recommence translation, which seems to be the essential function of trans-translation. This is SsrA-binding protein from Fervidobacterium nodosum (strain ATCC 35602 / DSM 5306 / Rt17-B1).